A 137-amino-acid polypeptide reads, in one-letter code: Small ribosomal subunit protein eS19 (137 aa).

The protein belongs to the eukaryotic ribosomal protein eS19 family. As to quaternary structure, component of the small ribosomal subunit.

It localises to the cytoplasm. This Encephalitozoon cuniculi (strain GB-M1) (Microsporidian parasite) protein is Small ribosomal subunit protein eS19 (RPS19).